Here is a 494-residue protein sequence, read N- to C-terminus: MKDFNLFLLYGNSILPECILILSLIVTIIIDLISDEKNTPWLYLVSLTALVTSVVILLFQWKEEPVSTFFETFQINSFNNIFRLFILICSLLCIPLSIDYIQCTKTALTEFLLFILTATLGGMFLCCANDLVTIFVALECLGLSSYLLSGYTKKDVRSNEATMKYLLMGGASSSILVYGFSLLYGLSGGEIQLQRIVNGLLTTQMYNSTGMFISMIFLLVGVGFKLSLVPFHQWTPDVYEGSPTPVVAFFSVTSKVAALALATRLFNILFPSSSTEWHLLLEILAISSMILGNFIAVTQISMKRMLAYSSISQIGYIIIGVIAAESNNGYASMITYMLIYIFMNLGTFACITLFGLRTGTDNIRDYAGLSTKDPLLTLSLVLCLLSLGGIPPLSGFFGKLYLFWCGWKAGLYFLVPIALSTSVISMYYYLKIIKLLFTKQNRQLTIYIQNYKVSSYALIPKSSIEITMIICVVASTLPGILINPIIAIAQNTFF.

A run of 14 helical transmembrane segments spans residues 13-33 (SILP…IDLI), 39-59 (TPWL…ILLF), 81-101 (IFRL…IDYI), 107-127 (ALTE…FLCC), 131-151 (LVTI…LSGY), 166-186 (LLMG…LYGL), 211-231 (MFIS…LVPF), 243-263 (PTPV…ALAT), 277-297 (WHLL…FIAV), 305-325 (MLAY…IAAE), 336-356 (YMLI…LFGL), 378-398 (LSLV…GFFG), 411-433 (LYFL…LKII), and 468-488 (MIIC…IIAI).

Belongs to the complex I subunit 2 family. In terms of assembly, NDH is composed of at least 16 different subunits, 5 of which are encoded in the nucleus.

The protein localises to the plastid. Its subcellular location is the chloroplast thylakoid membrane. It carries out the reaction a plastoquinone + NADH + (n+1) H(+)(in) = a plastoquinol + NAD(+) + n H(+)(out). The enzyme catalyses a plastoquinone + NADPH + (n+1) H(+)(in) = a plastoquinol + NADP(+) + n H(+)(out). Functionally, NDH shuttles electrons from NAD(P)H:plastoquinone, via FMN and iron-sulfur (Fe-S) centers, to quinones in the photosynthetic chain and possibly in a chloroplast respiratory chain. The immediate electron acceptor for the enzyme in this species is believed to be plastoquinone. Couples the redox reaction to proton translocation, and thus conserves the redox energy in a proton gradient. The sequence is that of NAD(P)H-quinone oxidoreductase subunit 2 B, chloroplastic from Angiopteris evecta (Mule's foot fern).